Here is a 905-residue protein sequence, read N- to C-terminus: DNA gyrase subunit A (905 aa).

In terms of domain architecture, Topo IIA-type catalytic spans 35-524 (IPDVRDGLKP…GEFDQDIEDL (490 aa)). Residue Y123 is the O-(5'-phospho-DNA)-tyrosine intermediate of the active site. Residues 551-557 (QKRGGKG) carry the GyrA-box motif.

Belongs to the type II topoisomerase GyrA/ParC subunit family. As to quaternary structure, heterotetramer, composed of two GyrA and two GyrB chains. In the heterotetramer, GyrA contains the active site tyrosine that forms a transient covalent intermediate with DNA, while GyrB binds cofactors and catalyzes ATP hydrolysis.

Its subcellular location is the cytoplasm. It carries out the reaction ATP-dependent breakage, passage and rejoining of double-stranded DNA.. Its function is as follows. A type II topoisomerase that negatively supercoils closed circular double-stranded (ds) DNA in an ATP-dependent manner to modulate DNA topology and maintain chromosomes in an underwound state. Negative supercoiling favors strand separation, and DNA replication, transcription, recombination and repair, all of which involve strand separation. Also able to catalyze the interconversion of other topological isomers of dsDNA rings, including catenanes and knotted rings. Type II topoisomerases break and join 2 DNA strands simultaneously in an ATP-dependent manner. This Rickettsia typhi (strain ATCC VR-144 / Wilmington) protein is DNA gyrase subunit A.